Consider the following 116-residue polypeptide: Aspartate 1-decarboxylase (116 aa).

S25 functions as the Schiff-base intermediate with substrate; via pyruvic acid in the catalytic mechanism. S25 carries the pyruvic acid (Ser) modification. Residue T57 coordinates substrate. Y58 functions as the Proton donor in the catalytic mechanism. 73 to 75 lines the substrate pocket; sequence GAA.

The protein belongs to the PanD family. In terms of assembly, heterooctamer of four alpha and four beta subunits. Pyruvate is required as a cofactor. In terms of processing, is synthesized initially as an inactive proenzyme, which is activated by self-cleavage at a specific serine bond to produce a beta-subunit with a hydroxyl group at its C-terminus and an alpha-subunit with a pyruvoyl group at its N-terminus.

Its subcellular location is the cytoplasm. The catalysed reaction is L-aspartate + H(+) = beta-alanine + CO2. It functions in the pathway cofactor biosynthesis; (R)-pantothenate biosynthesis; beta-alanine from L-aspartate: step 1/1. Catalyzes the pyruvoyl-dependent decarboxylation of aspartate to produce beta-alanine. This chain is Aspartate 1-decarboxylase, found in Leptospira interrogans serogroup Icterohaemorrhagiae serovar copenhageni (strain Fiocruz L1-130).